The sequence spans 198 residues: RNA-free ribonuclease P (198 aa).

This sequence belongs to the HARP family.

The catalysed reaction is Endonucleolytic cleavage of RNA, removing 5'-extranucleotides from tRNA precursor.. In terms of biological role, RNA-free RNase P that catalyzes the removal of the 5'-leader sequence from pre-tRNA to produce the mature 5'-terminus. This Thermococcus kodakarensis (strain ATCC BAA-918 / JCM 12380 / KOD1) (Pyrococcus kodakaraensis (strain KOD1)) protein is RNA-free ribonuclease P.